The chain runs to 689 residues: MNFENLLIEVGTEELPPKSLRKLAESFLNNFTDELKKAELTFESAVWHAAPRRLAINVNQLALAQADKVVEKRGPAVAQAFDADGNPTKAAMGWARGNGITVEQADRLKTDKGEWLLHQAKVVGVETKSLIAAMAQRSLDKLPIPKPMRWGSNTTQFIRPVHTVTMLLGSEVVEGELLGIKSDRIIRGHRFMGKPSIELDHADNYLSVLKEQGKVDANYEARKAQIKADAEAAAAKLGGVADLEDDLLEEVTSLVEWPVVLTASFEEKFLDVPAEALVYTMKGDQKYFPVFDDAGQLLPNFIFVTNIESKDPQQIISGNEKVVRPRLADAEFFFETDKKNSLESRLSSLETVVFQKQLGTIKQRVERISAMAAYIATSIGANSEEAARAGLLSKSDLMTNMVMEFTDLQGTMGMHYARLNGETEAVAVALSEQYKPKFSGDTVPTAPVSICVALAEKLDTLVGIFGIGQAPKGAADPFALRRAAIGVLRICLENNLPLDLVDLIAKAQELHGENLTNDKAPEQVLEFFMGRFRAWYQDQGISVDVILAVLARRPTAPADFESRIKAVAHFRTLEQALALAAANKRVSNILAKVEGELPATIDEALLVEAAEKALAAKLAELQPQLAPLFAAANYQEALALLASLRESVDTFFEDVMVMADDEALKNNRLALLSSLRDQFLHAADISLLQ.

It belongs to the class-II aminoacyl-tRNA synthetase family. Tetramer of two alpha and two beta subunits.

The protein resides in the cytoplasm. It carries out the reaction tRNA(Gly) + glycine + ATP = glycyl-tRNA(Gly) + AMP + diphosphate. The chain is Glycine--tRNA ligase beta subunit from Shewanella piezotolerans (strain WP3 / JCM 13877).